The chain runs to 610 residues: Probable galacturonosyltransferase 5 (610 aa).

Residues 1–6 lie on the Cytoplasmic side of the membrane; that stretch reads MNQVRR. Residues 7–27 traverse the membrane as a helical; Signal-anchor for type II membrane protein segment; the sequence is WQRILILSLLLLSVLAPIVFV. Over 28 to 610 the chain is Lumenal; that stretch reads SNRLKSITSV…PHLQRCNIHD (583 aa). The segment covering 86–101 has biased composition (polar residues); that stretch reads LSNSSDKSNDTVQSNE. Residues 86–170 form a disordered region; sequence LSNSSDKSND…KNTRVQLERA (85 aa). N-linked (GlcNAc...) asparagine glycans are attached at residues asparagine 88 and asparagine 94. Residues 110-123 are compositionally biased toward basic and acidic residues; it reads EVDKGNNHKPKEEQ. Polar residues predominate over residues 124–135; it reads AVSQKTTVSSNA. Positions 139-170 are enriched in basic and acidic residues; it reads ISARDIQLNHKTEFRPPSSKSEKNTRVQLERA. Residues asparagine 196, asparagine 338, asparagine 401, and asparagine 475 are each glycosylated (N-linked (GlcNAc...) asparagine).

Belongs to the glycosyltransferase 8 family. As to expression, expressed in roots, inflorescences, siliques, leaves and stems.

The protein localises to the golgi apparatus membrane. It participates in glycan metabolism; pectin biosynthesis. Its function is as follows. May be involved in pectin and/or xylans biosynthesis in cell walls. This Arabidopsis thaliana (Mouse-ear cress) protein is Probable galacturonosyltransferase 5 (GAUT5).